The primary structure comprises 253 residues: Toxin PezT (253 aa).

G39–T46 is an ATP binding site. The active-site Proton acceptor is D66.

The protein belongs to the zeta toxin family. Forms a PezA(2)PezT(2) heterotetramer. The heterotetramer is much more stable than either of the proteins alone, and a specific mechanism may be necessary to liberate the toxin.

The enzyme catalyses UDP-N-acetyl-alpha-D-glucosamine + ATP = UDP-N-acetyl-alpha-D-glucosamine 3'-phosphate + ADP + H(+). In terms of biological role, toxic component of a type II toxin-antitoxin (TA) system. Phosphorylates UDP-N-acetyl-D-glucosamine (UNAG) on the 3'-hydroxyl group of the N-acetyl-D-glucosamine moiety, yielding UNAG-3P. UNAG-3P inhibits MurA, the first committed step in cell wall synthesis, which is then blocked. Upon expression in E.coli results in decreased cell growth and viability, followed 3 hours later by growth restoration; the toxic effect and phosphorylation of UNAG are neutralized by coexpression with cognate antitoxin PezA. A mutant lacking the last 11 residues is stably maintained in E.coli, unlike the wild-type which undergoes spontaneous mutation. Expression of the deletion mutant in rapidly growing liquid cultures leads to cell bulging, permeabilization and massive lysis by 1 hour. Cells that survive are not able to undergo cytokinesis. Expression in slowly growing cells leads to bulging but not lysis. Acts as a corepressor of its own operon with PezA; it is not clear if it binds DNA alone. This Streptococcus pneumoniae serotype 4 (strain ATCC BAA-334 / TIGR4) protein is Toxin PezT (pezT).